A 129-amino-acid chain; its full sequence is M-zodatoxin-Lt8a (129 aa).

A signal peptide spans 1–20 (MKYFVVALALVAAFACIAES). The propeptide occupies 21 to 60 (KPAESEHELAEVEEENELADLEDAVWLEHLADLSDLEEAR). The short motif at 57–60 (EEAR) is the Processing quadruplet motif element.

It belongs to the cationic peptide 06 (cytoinsectotoxin) family. Post-translationally, cleavage of the propeptide depends on the processing quadruplet motif (XXXR, with at least one of X being E). As to expression, expressed by the venom gland.

It localises to the secreted. Its function is as follows. Insecticidal, cytolytic and antimicrobial peptide. Has insecticidal activity against the flesh fly S.carnaria, and against the cockroach N.cinerea. Has insecticidal activity against D.melanogaster. Has hemolytic activity against human erythrocytes (EC(50)=6 uM). Has cytolytic activity against insect Sf9 cells (EC(50)=1 uM) and human leukocytes (EC(50)=3 uM). Has antibacterial activity against the Gram-positive bacteria A.globiformis VKM Ac-1112 (MIC=0.5 uM), and B.subtilis VKM B-501 (MIC=0.6-0.9 uM), and against the Gram-negative bacteria E.coli C600 (MIC=0.5 uM), E.coli DH5alpha (MIC=0.9 uM), E.coli MH1 (MIC=0.5 uM), P.aeruginosa PAO1 (MIC=1.9 uM), and P.fluorescens VKM B-894 (MIC=3.8 uM). Lacks antimicrobial activity against the Gram-positive bacteria M.luteus and S.aureus, and against the Gram-negative bacterium S.marcescens. Forms voltage-dependent, ion-permeable channels in membranes. At high concentration causes cell membrane lysis. The protein is M-zodatoxin-Lt8a (cit 1-1) of Lachesana tarabaevi (Spider).